The following is a 234-amino-acid chain: Large ribosomal subunit protein uL1 (234 aa).

This sequence belongs to the universal ribosomal protein uL1 family. As to quaternary structure, part of the 50S ribosomal subunit.

Functionally, binds directly to 23S rRNA. The L1 stalk is quite mobile in the ribosome, and is involved in E site tRNA release. In terms of biological role, protein L1 is also a translational repressor protein, it controls the translation of the L11 operon by binding to its mRNA. The protein is Large ribosomal subunit protein uL1 of Campylobacter fetus subsp. fetus (strain 82-40).